A 227-amino-acid chain; its full sequence is 2-C-methyl-D-erythritol 4-phosphate cytidylyltransferase (227 aa).

This sequence belongs to the IspD/TarI cytidylyltransferase family. IspD subfamily.

It carries out the reaction 2-C-methyl-D-erythritol 4-phosphate + CTP + H(+) = 4-CDP-2-C-methyl-D-erythritol + diphosphate. It participates in isoprenoid biosynthesis; isopentenyl diphosphate biosynthesis via DXP pathway; isopentenyl diphosphate from 1-deoxy-D-xylulose 5-phosphate: step 2/6. In terms of biological role, catalyzes the formation of 4-diphosphocytidyl-2-C-methyl-D-erythritol from CTP and 2-C-methyl-D-erythritol 4-phosphate (MEP). The protein is 2-C-methyl-D-erythritol 4-phosphate cytidylyltransferase of Dehalococcoides mccartyi (strain ATCC BAA-2266 / KCTC 15142 / 195) (Dehalococcoides ethenogenes (strain 195)).